We begin with the raw amino-acid sequence, 295 residues long: ATP synthase gamma chain (295 aa).

This sequence belongs to the ATPase gamma chain family. F-type ATPases have 2 components, CF(1) - the catalytic core - and CF(0) - the membrane proton channel. CF(1) has five subunits: alpha(3), beta(3), gamma(1), delta(1), epsilon(1). CF(0) has three main subunits: a, b and c.

The protein localises to the cell inner membrane. Functionally, produces ATP from ADP in the presence of a proton gradient across the membrane. The gamma chain is believed to be important in regulating ATPase activity and the flow of protons through the CF(0) complex. The sequence is that of ATP synthase gamma chain from Chlorobium phaeobacteroides (strain BS1).